The following is a 968-amino-acid chain: Probable histidine kinase 1 (968 aa).

Coiled coils occupy residues 89 to 120 (LLKE…FQDE) and 169 to 204 (KERA…QSHT). Residues 372-655 (TMSHEIRSPL…TFSFVLPCKI (284 aa)) enclose the Histidine kinase domain. Histidine 375 carries the phosphohistidine; by autocatalysis modification. The tract at residues 737-757 (STNSASTAHQSNGPSVSRTNK) is disordered. Polar residues predominate over residues 738–754 (TNSASTAHQSNGPSVSR). Residues 818 to 965 (KILLVEDNKV…NIKECLQQYL (148 aa)) enclose the Response regulatory domain. Residue aspartate 867 is modified to 4-aspartylphosphate.

Activation probably requires a transfer of a phosphate group between a His in the transmitter domain and an Asp of the receiver domain.

The enzyme catalyses ATP + protein L-histidine = ADP + protein N-phospho-L-histidine.. Its function is as follows. Cytokinin receptor related to bacterial two-component regulators. Functions as a histidine kinase and transmits the stress signal to a downstream MAPK cascade. This is Probable histidine kinase 1 from Oryza sativa subsp. indica (Rice).